The following is a 264-amino-acid chain: ATP synthase subunit a (264 aa).

A run of 5 helical transmembrane segments spans residues L39–I59, V97–V117, T139–Y159, L205–W225, and L239–L259.

Belongs to the ATPase A chain family. In terms of assembly, F-type ATPases have 2 components, CF(1) - the catalytic core - and CF(0) - the membrane proton channel. CF(1) has five subunits: alpha(3), beta(3), gamma(1), delta(1), epsilon(1). CF(0) has three main subunits: a(1), b(2) and c(9-12). The alpha and beta chains form an alternating ring which encloses part of the gamma chain. CF(1) is attached to CF(0) by a central stalk formed by the gamma and epsilon chains, while a peripheral stalk is formed by the delta and b chains.

Its subcellular location is the cell inner membrane. Key component of the proton channel; it plays a direct role in the translocation of protons across the membrane. In Coxiella burnetii (strain CbuG_Q212) (Coxiella burnetii (strain Q212)), this protein is ATP synthase subunit a.